The sequence spans 475 residues: AP-1 complex subunit mu-1-I (475 aa).

Residues 175–473 (KNEAFLDIVE…TQSGDDYTIR (299 aa)) form the MHD domain. A disordered region spans residues 240–262 (ASATTSDNNTETDKKPSITSSSA).

The protein belongs to the adaptor complexes medium subunit family. In terms of assembly, adaptor protein complex 1 (AP-1) is a heterotetramer composed of two large adaptins (gamma-type subunit APL4 and beta-type subunit APL2), a medium adaptin (mu-type subunit APM1) and a small adaptin (sigma-type subunit APS1). AP-1 interacts with clathrin.

It is found in the cytoplasmic vesicle. It localises to the clathrin-coated vesicle membrane. The protein localises to the membrane. Its subcellular location is the clathrin-coated pit. Functionally, component of the adaptor complexes which link clathrin to receptors in coated vesicles. Clathrin-associated protein complexes are believed to interact with the cytoplasmic tails of membrane proteins, leading to their selection and concentration. The AP-1 complex interacts directly with clathrin. AP57 is probably a subunit of the Golgi membrane adaptor. The sequence is that of AP-1 complex subunit mu-1-I (APM1) from Saccharomyces cerevisiae (strain ATCC 204508 / S288c) (Baker's yeast).